The chain runs to 202 residues: MGIQLIVFLGNPGAEYEETRHNAAWLLLTYLFPSIVLPWRCGCRGSIARIEGFEGSSEEVWLLKPLTYMNRSGKSVGAACAFLQTDAKQLLVVHDELELPFGVVSLKQGGGLGGHNGLRSIKEVLGTADFWRLRIGIGRPPSESVNIAQYVLSAFYPAEMAAFPKLGRATRDLLCQLVVTDQAATVTLLSAWRKKRLLSLCE.

TRNA is bound at residue Y16. H21 functions as the Proton acceptor in the catalytic mechanism. TRNA is bound by residues Y68, N70, and N116.

This sequence belongs to the PTH family. Monomer.

The protein localises to the cytoplasm. The catalysed reaction is an N-acyl-L-alpha-aminoacyl-tRNA + H2O = an N-acyl-L-amino acid + a tRNA + H(+). Hydrolyzes ribosome-free peptidyl-tRNAs (with 1 or more amino acids incorporated), which drop off the ribosome during protein synthesis, or as a result of ribosome stalling. In terms of biological role, catalyzes the release of premature peptidyl moieties from peptidyl-tRNA molecules trapped in stalled 50S ribosomal subunits, and thus maintains levels of free tRNAs and 50S ribosomes. This chain is Peptidyl-tRNA hydrolase, found in Treponema pallidum (strain Nichols).